Here is an 85-residue protein sequence, read N- to C-terminus: Large ribosomal subunit protein bL27 (85 aa).

Residues 1-25 (MAHKKAGSSSKNGRDSNPQYLGVKR) form a disordered region. Residues 7–19 (GSSSKNGRDSNPQ) show a composition bias toward polar residues.

The protein belongs to the bacterial ribosomal protein bL27 family.

In Micrococcus luteus (strain ATCC 4698 / DSM 20030 / JCM 1464 / CCM 169 / CCUG 5858 / IAM 1056 / NBRC 3333 / NCIMB 9278 / NCTC 2665 / VKM Ac-2230) (Micrococcus lysodeikticus), this protein is Large ribosomal subunit protein bL27.